We begin with the raw amino-acid sequence, 347 residues long: NADH-ubiquinone oxidoreductase chain 2 (347 aa).

The next 11 helical transmembrane spans lie at 3 to 23 (PLIF…VMTT), 25 to 45 (HWVM…PILM), 59 to 79 (YFLT…INLT), 96 to 116 (IIMT…FWVP), 122 to 142 (VQLS…MSIL), 149 to 169 (INLD…GWGG), 178 to 198 (ILAY…VYNP), 201 to 221 (ALLN…MLMV), 237 to 257 (MPLL…LPPL), 274 to 294 (DSMI…YFYM), and 326 to 346 (LSPL…LALL).

Belongs to the complex I subunit 2 family. In terms of assembly, core subunit of respiratory chain NADH dehydrogenase (Complex I) which is composed of 45 different subunits. Interacts with TMEM242.

The protein resides in the mitochondrion inner membrane. It catalyses the reaction a ubiquinone + NADH + 5 H(+)(in) = a ubiquinol + NAD(+) + 4 H(+)(out). In terms of biological role, core subunit of the mitochondrial membrane respiratory chain NADH dehydrogenase (Complex I) which catalyzes electron transfer from NADH through the respiratory chain, using ubiquinone as an electron acceptor. Essential for the catalytic activity and assembly of complex I. The chain is NADH-ubiquinone oxidoreductase chain 2 from Nyctimene aello (Broad-striped tube-nosed fruit bat).